The primary structure comprises 264 residues: tRNA (guanine-N(1)-)-methyltransferase (264 aa).

S-adenosyl-L-methionine is bound by residues glycine 133 and 152–157; that span reads LGDFVM. Basic and acidic residues predominate over residues 240–251; the sequence is QRRPDLWRKARG. A disordered region spans residues 240–264; sequence QRRPDLWRKARGGEPPADESGEVRR. A compositionally biased stretch (acidic residues) spans 255 to 264; that stretch reads PADESGEVRR.

It belongs to the RNA methyltransferase TrmD family. In terms of assembly, homodimer.

It localises to the cytoplasm. It catalyses the reaction guanosine(37) in tRNA + S-adenosyl-L-methionine = N(1)-methylguanosine(37) in tRNA + S-adenosyl-L-homocysteine + H(+). In terms of biological role, specifically methylates guanosine-37 in various tRNAs. The chain is tRNA (guanine-N(1)-)-methyltransferase from Sorangium cellulosum (strain So ce56) (Polyangium cellulosum (strain So ce56)).